We begin with the raw amino-acid sequence, 245 residues long: Nisin immunity protein (245 aa).

Residues 1-19 form the signal peptide; sequence MRRYLILIVALIGITGLSG. Cys20 is lipidated: N-palmitoyl cysteine. A lipid anchor (S-diacylglycerol cysteine) is attached at Cys20.

It localises to the cell membrane. Its function is as follows. Involved in immunity against exogenously supplied nisin. This Lactococcus lactis subsp. lactis (Streptococcus lactis) protein is Nisin immunity protein (nisI).